The following is a 332-amino-acid chain: Mitochondrial glycine transporter (332 aa).

Solcar repeat units follow at residues 11–94 (SSSY…LRQN), 121–205 (LSNL…LKKR), and 235–319 (TSAS…LIRR). The next 6 helical transmembrane spans lie at 17-42 (FGAGLGSGILSAVLLQPADLLKTRVQ), 69-95 (GTVPSALRTGFGSAIYFTSLNALRQNV), 127-152 (LTTGAVARAGAGFILMPMTIIKVRYE), 180-203 (GFGATAIRDAPYAGLYVLFYEELK), 239-265 (INFGSGVLAAGLATAITNPFDAIKTRI), and 294-312 (GLGLRMGRKAVSSALAWTI).

This sequence belongs to the mitochondrial carrier (TC 2.A.29) family. SLC25A38 subfamily.

Its subcellular location is the mitochondrion inner membrane. The enzyme catalyses glycine(in) = glycine(out). Functionally, mitochondrial glycine transporter that imports glycine into the mitochondrial matrix. Plays an important role in providing glycine for the first enzymatic step in heme biosynthesis, the condensation of glycine with succinyl-CoA to produce 5-aminolevulinate (ALA) in the mitochondrial matrix. This Botryotinia fuckeliana (strain B05.10) (Noble rot fungus) protein is Mitochondrial glycine transporter.